Consider the following 383-residue polypeptide: NifS-like protein (383 aa).

Pyridoxal 5'-phosphate-binding positions include 58–59 and 184–186; these read SE and SIN.

The protein belongs to the class-V pyridoxal-phosphate-dependent aminotransferase family. NifS/IscS subfamily. Pyridoxal 5'-phosphate is required as a cofactor.

It is found in the virion. The polypeptide is NifS-like protein (African swine fever virus (strain Badajoz 1971 Vero-adapted) (Ba71V)).